A 319-amino-acid chain; its full sequence is Taste receptor type 2 member 14 (319 aa).

The Extracellular segment spans residues 1–7 (MDGVIKS). Residues 8 to 28 (IFTFILIVEFIIGNLGNSFIV) form a helical membrane-spanning segment. Residues 29–55 (LVNCIDWVKRRKISLVDQILIALAISR) are Cytoplasmic-facing. A helical membrane pass occupies residues 56 to 76 (ISLVWSIFGSWCVSVFFPALF). At 77–87 (ATEKLLRMLTN) the chain is on the extracellular side. 2 residues coordinate cholesterol: Thr86 and Trp89. Residues 88–108 (IWTVTNHFSVWLATILGTFYF) form a helical membrane-spanning segment. At 109-129 (LKIANFSNSIFLYLKWRVKKV) the chain is on the cytoplasmic side. The chain crosses the membrane as a helical span at residues 130–150 (VLVLLLVTLGLLFLNILLINI). Over 151 to 184 (HINASINGYRGNMTCSSASCNFIRFSRAIALTST) the chain is Extracellular. N-linked (GlcNAc...) asparagine glycosylation is found at Asn153 and Asn162. Position 180 (Ala180) interacts with cholesterol. A helical transmembrane segment spans residues 185 to 205 (VFVLIPFTLSLATSLLLSFSL). Topologically, residues 206 to 233 (WKHHKKMQHTVKGYRDVSTKAHRGVMQT) are cytoplasmic. Residues 234–254 (VITFLLLYAVFLLTFFISIWA) traverse the membrane as a helical segment. Residues 255 to 263 (SVRLKENQI) are Extracellular-facing. The helical transmembrane segment at 264–284 (IILSEMMGLAYPSGHSCVLIL) threads the bilayer. Positions 267 and 270 each coordinate cholesterol. Residues 285-319 (GNKKLRQASLSVLWWLRYRFKHGEPSGHKEFRESS) are Cytoplasmic-facing.

Belongs to the G-protein coupled receptor T2R family. As to quaternary structure, core component of the TAS2R14-GNAI1 complex, consisting of TAS2R14, GNAI1, GNB1 and GNG2; within the complex interacts with GNAI1. Core component of the TAS2R14-GNAT3 complex, consisting of TAS2R14, GNAT3, GNB1 and GNG2; within the complex interacts with GNAT3. Core component of the TAS2R14-GNAS2 complex, consisting of TAS2R14, GNAS2, GNB1 and GNG2; within the complex interacts with GNAS2.

The protein localises to the membrane. The enzyme catalyses Ca(2+)(in) = Ca(2+)(out). It catalyses the reaction 3',5'-cyclic AMP(in) = 3',5'-cyclic AMP(out). Basal activity is enhanced by binding to bitter tastants, such as flufenamic acid and aristolochic acid. Regulated by cholesterol in a concentration-dependent manner. Functionally, gustducin-linked G-protein coupled receptor that plays a role in the perception of bitterness. The activity of this receptor stimulates GNAT3, activating the gustducin G-protein pathway. Likely plays a role in sensing the chemical composition of the gastrointestinal content and other extra-oral tissues via the inhibitory G-protein pathways. The polypeptide is Taste receptor type 2 member 14 (TAS2R14) (Macaca mulatta (Rhesus macaque)).